Here is a 233-residue protein sequence, read N- to C-terminus: Phosphoglycolate phosphatase 2 (233 aa).

Asp13 functions as the Nucleophile in the catalytic mechanism. Residues Asp13 and Asp15 each contribute to the Mg(2+) site. Lys152 contributes to the substrate binding site. Asp174 and Asp178 together coordinate Mg(2+).

It belongs to the archaeal SPP-like hydrolase family. Mg(2+) serves as cofactor.

The catalysed reaction is 2-phosphoglycolate + H2O = glycolate + phosphate. Functionally, catalyzes the dephosphorylation of 2-phosphoglycolate. The sequence is that of Phosphoglycolate phosphatase 2 from Saccharolobus solfataricus (strain ATCC 35092 / DSM 1617 / JCM 11322 / P2) (Sulfolobus solfataricus).